A 426-amino-acid chain; its full sequence is Enolase (426 aa).

Gln-163 lines the (2R)-2-phosphoglycerate pocket. Glu-205 acts as the Proton donor in catalysis. Positions 242, 286, and 313 each coordinate Mg(2+). The (2R)-2-phosphoglycerate site is built by Lys-338, Arg-367, Ser-368, and Lys-389. The active-site Proton acceptor is the Lys-338.

This sequence belongs to the enolase family. Requires Mg(2+) as cofactor.

The protein localises to the cytoplasm. It is found in the secreted. It localises to the cell surface. It carries out the reaction (2R)-2-phosphoglycerate = phosphoenolpyruvate + H2O. Its pathway is carbohydrate degradation; glycolysis; pyruvate from D-glyceraldehyde 3-phosphate: step 4/5. Its function is as follows. Catalyzes the reversible conversion of 2-phosphoglycerate (2-PG) into phosphoenolpyruvate (PEP). It is essential for the degradation of carbohydrates via glycolysis. This chain is Enolase, found in Helicobacter pylori (strain Shi470).